Here is a 404-residue protein sequence, read N- to C-terminus: MFQSCLPGALRSWSRGVFSTSTRPRLVLGIETSCDETGAAVLDETGRILGESLHSQKETHLKTGGIIPLVAQRLHRENISRVVQEALNRSAIEPSELTAVATTVKPGLALSLGIGLDYSLKFVRQHQKPFIPIHHMEAHALTVRMLHPLDFPFLVLLVSGGHSLLALAKGIDEFLLLGQTLDEAAGDTLDKIARRLSLRNHPECGTLSGGQAIERLAKEGDRLAFHFISPMGQNYDCNFSFAGLRTQITGAINKKEKEEGVEAGQFLSCVKDIAAASQHTVASHLAKRTHRAILFCKSKGLLPEQNPTLIVSGGVASNEYIRQILKIITDATGLHLLCPPSKFCTDNGVMIAWNGIERLKQGKGILSYSEEVSYEPKAPLGLDITSEVKEAAIKVPKLKLRTNS.

The N-terminal 27 residues, 1 to 27, are a transit peptide targeting the mitochondrion; sequence MFQSCLPGALRSWSRGVFSTSTRPRLV. The a divalent metal cation site is built by H135 and H139. Substrate-binding positions include 157–161, D190, G210, E214, 317–318, and T345; these read LVSGG and SN. An a divalent metal cation-binding site is contributed by D346.

It belongs to the KAE1 / TsaD family. Monomer. A divalent metal cation is required as a cofactor.

It is found in the mitochondrion. The enzyme catalyses L-threonylcarbamoyladenylate + adenosine(37) in tRNA = N(6)-L-threonylcarbamoyladenosine(37) in tRNA + AMP + H(+). Its function is as follows. Required for the formation of a threonylcarbamoyl group on adenosine at position 37 (t(6)A37) in mitochondrial tRNAs that read codons beginning with adenine. Probably involved in the transfer of the threonylcarbamoyl moiety of threonylcarbamoyl-AMP (TC-AMP) to the N6 group of A37. Involved in mitochondrial genome maintenance. This is tRNA N6-adenosine threonylcarbamoyltransferase, mitochondrial from Danio rerio (Zebrafish).